The primary structure comprises 143 residues: Transcriptional regulator MraZ (143 aa).

SpoVT-AbrB domains lie at 5-47 (TYTP…PREE) and 76-119 (ADEQ…DAAA).

This sequence belongs to the MraZ family. As to quaternary structure, forms oligomers.

It is found in the cytoplasm. The protein localises to the nucleoid. This chain is Transcriptional regulator MraZ, found in Corynebacterium diphtheriae (strain ATCC 700971 / NCTC 13129 / Biotype gravis).